A 305-amino-acid chain; its full sequence is MAAREESTQSANRVLRISQLDALELNKALEQLVWSQFTQCFHGFKPGLLARFEPEVKAFLWLFLWRFTIYSKNATVGQSVLNIQYKNDSSPNPVYQPPSKNQKLLYAVCTIGGRWLEERCYDLFRNRHLASFGKAKQCMNFVVGLLKLGELMNFLIFLQKGKFATLTERLLGIHSVFCKPQSMREVGFEYMNRELLWHGFAEFLVFLLPLINIQKLKAKLSSWCIPLTSTAGSDSTLGSSGKECALCGEWPTMPHTIGCEHVFCYYCVKSSFLFDMYFTCPKCGTEVHSVQPLKSGIEMSEVNAL.

At 1-15 the chain is on the peroxisomal matrix side; the sequence is MAAREESTQSANRVL. The helical transmembrane segment at 16 to 42 threads the bilayer; it reads RISQLDALELNKALEQLVWSQFTQCFH. The Cytoplasmic portion of the chain corresponds to 43-48; the sequence is GFKPGL. A helical transmembrane segment spans residues 49-74; sequence LARFEPEVKAFLWLFLWRFTIYSKNA. Residues 75–98 lie on the Peroxisomal matrix side of the membrane; that stretch reads TVGQSVLNIQYKNDSSPNPVYQPP. Residues 99–125 form a helical membrane-spanning segment; it reads SKNQKLLYAVCTIGGRWLEERCYDLFR. The Cytoplasmic portion of the chain corresponds to 126 to 133; sequence NRHLASFG. A helical membrane pass occupies residues 134 to 160; that stretch reads KAKQCMNFVVGLLKLGELMNFLIFLQK. Residues 161 to 187 are Peroxisomal matrix-facing; it reads GKFATLTERLLGIHSVFCKPQSMREVG. A helical membrane pass occupies residues 188–211; it reads FEYMNRELLWHGFAEFLVFLLPLI. The Cytoplasmic portion of the chain corresponds to 212 to 305; it reads NIQKLKAKLS…GIEMSEVNAL (94 aa). Zn(2+)-binding residues include Cys-244, Cys-247, Cys-259, His-261, Cys-264, Cys-267, Cys-280, and Cys-283. The segment at 244–284 adopts an RING-type zinc-finger fold; that stretch reads CALCGEWPTMPHTIGCEHVFCYYCVKSSFLFDMYFTCPKCG.

Belongs to the pex2/pex10/pex12 family. In terms of assembly, component of the PEX2-PEX10-PEX12 retrotranslocation channel, composed of PEX2, PEX10 and PEX12. In terms of processing, forms intramolecular and intermolecular disulfide bonds in response to reactive oxygen species (ROS), promoting higher stability.

Its subcellular location is the peroxisome membrane. It catalyses the reaction [E2 ubiquitin-conjugating enzyme]-S-ubiquitinyl-L-cysteine + [acceptor protein]-L-cysteine = [E2 ubiquitin-conjugating enzyme]-L-cysteine + [acceptor protein]-S-ubiquitinyl-L-cysteine.. It carries out the reaction S-ubiquitinyl-[E2 ubiquitin-conjugating enzyme]-L-cysteine + [acceptor protein]-L-lysine = [E2 ubiquitin-conjugating enzyme]-L-cysteine + N(6)-ubiquitinyl-[acceptor protein]-L-lysine.. It participates in protein modification; protein ubiquitination. Its function is as follows. E3 ubiquitin-protein ligase component of a retrotranslocation channel required for peroxisome organization by mediating export of the PEX5 receptor from peroxisomes to the cytosol, thereby promoting PEX5 recycling. The retrotranslocation channel is composed of PEX2, PEX10 and PEX12; each subunit contributing transmembrane segments that coassemble into an open channel that specifically allows the passage of PEX5 through the peroxisomal membrane. PEX2 also regulates peroxisome organization by acting as a E3 ubiquitin-protein ligase. PEX2 ubiquitinates PEX5 during its passage through the retrotranslocation channel: catalyzes monoubiquitination of PEX5 at 'Cys-11', a modification that acts as a signal for PEX5 extraction into the cytosol. Required for pexophagy in response to starvation by mediating ubiquitination of peroxisomal proteins, such as PEX5 and ABCD3/PMP70. Also involved in the response to reactive oxygen species (ROS) by mediating 'Lys-48'-linked polyubiquitination and subsequent degradation of PNPLA2/ATGL, thereby regulating lipolysis. The sequence is that of Peroxisome biogenesis factor 2 (Pex2) from Rattus norvegicus (Rat).